A 550-amino-acid polypeptide reads, in one-letter code: Chaperonin GroEL (550 aa).

Residues 30–33 (TLGP), K51, 87–91 (DGTTT), G415, and D496 contribute to the ATP site.

The protein belongs to the chaperonin (HSP60) family. Forms a cylinder of 14 subunits composed of two heptameric rings stacked back-to-back. Interacts with the co-chaperonin GroES.

It is found in the cytoplasm. It carries out the reaction ATP + H2O + a folded polypeptide = ADP + phosphate + an unfolded polypeptide.. In terms of biological role, together with its co-chaperonin GroES, plays an essential role in assisting protein folding. The GroEL-GroES system forms a nano-cage that allows encapsulation of the non-native substrate proteins and provides a physical environment optimized to promote and accelerate protein folding. The chain is Chaperonin GroEL from Rickettsia prowazekii (strain Madrid E).